Here is a 339-residue protein sequence, read N- to C-terminus: Transcription initiation factor IIB (339 aa).

The TFIIB-type zinc-finger motif lies at 39 to 70 (EELICPVCGSKSIIKDYERAEIVCEMCGCVLQ). Cys43, Cys46, Cys62, and Cys65 together coordinate Zn(2+). 2 repeat units span residues 156–239 (SELD…SREL) and 250–331 (DYVP…ELTE).

This sequence belongs to the TFIIB family.

Stabilizes TBP binding to an archaeal box-A promoter. Also responsible for recruiting RNA polymerase II to the pre-initiation complex (DNA-TBP-TFIIB). The chain is Transcription initiation factor IIB from Methanococcus maripaludis (strain C5 / ATCC BAA-1333).